The chain runs to 281 residues: MSSYQDHKALAELTLGKPTAYCDHYDVTLLQAVPRSMNREPLGLYPDNLPFHGADIWTLYELSWLNSKGLPQVAIGEISLNADSVNLIESKSFKLYLNSFNQTVFTDWESVRTTLQQDLSACAQGEVSITLYRLDEMTHQPIANFSGECLDEQDLYIDSYEFNADYLQGAAGKNRVTESLVSHLLKSNCLITHQPDWGSVQISYSGPQINREALLRYLISFRHHNEFHEQCVERIFNDIMRFCQPETLSVYARYTRRGGLDINPWRSNTDFVPLTGRLARQ.

Position 88–90 (88–90 (IES)) interacts with substrate. 90–91 (SK) serves as a coordination point for NADPH. Cysteine 189 (thioimide intermediate) is an active-site residue. Aspartate 196 serves as the catalytic Proton donor. Position 228 to 229 (228 to 229 (HE)) interacts with substrate. 257–258 (RG) contributes to the NADPH binding site.

It belongs to the GTP cyclohydrolase I family. QueF type 2 subfamily. Homodimer.

It is found in the cytoplasm. It carries out the reaction 7-aminomethyl-7-carbaguanine + 2 NADP(+) = 7-cyano-7-deazaguanine + 2 NADPH + 3 H(+). It participates in tRNA modification; tRNA-queuosine biosynthesis. Its function is as follows. Catalyzes the NADPH-dependent reduction of 7-cyano-7-deazaguanine (preQ0) to 7-aminomethyl-7-deazaguanine (preQ1). This Yersinia enterocolitica serotype O:8 / biotype 1B (strain NCTC 13174 / 8081) protein is NADPH-dependent 7-cyano-7-deazaguanine reductase.